The chain runs to 1894 residues: Adenylate kinase 9 (1894 aa).

Residues 32–286 (TCFIIFGKPG…LFMTVIERLK (255 aa)) form an adenylate kinase 1 region. Residue 41-46 (GAGKTT) coordinates ATP. An NMP 1 region spans residues 61–90 (EALSVLEEHIAAEKETGAMLQSLLVSGHSI). 117-120 (EMPS) is a binding site for AMP. The interval 161–206 (GQRQHSTTGYVYTREQWDPEIIESRRRKKRDFPKEGKSEEEEEEEE) is LID 1. The segment at 188 to 211 (KKRDFPKEGKSEEEEEEEEQEEEE) is disordered. Residues 198–211 (SEEEEEEEEQEEEE) show a composition bias toward acidic residues. AMP is bound at residue Arg-230. The stretch at 451–478 (IKVVQQRLLNEKQAKQQEERTLKELQVQ) forms a coiled coil. The segment at 492–533 (SEELPSLENTGSKLSSLEIGQEDKSKSETTITGDQVKDVSTE) is disordered. Residues 651–691 (LERLQEEAQAKKREEEEIRKVKEEELRLEEEKQRLMELATK) are a coiled coil. 2 disordered regions span residues 710 to 789 (PYPD…LGSE) and 876 to 911 (EEEA…EKRR). Acidic residues predominate over residues 715–736 (PDNEAEEEVEDSEIHEESEAQE). Basic and acidic residues-rich tracts occupy residues 757–768 (EGDHEPEAEFKP) and 777–789 (ETEK…LGSE). Residues 876 to 903 (EEEAEDYQAETEIDEEQEEEEEEEEEGE) show a composition bias toward acidic residues. The interval 976 to 1187 (LRICLLGPHG…VAKRRAELIL (212 aa)) is adenylate kinase 2. 985 to 990 (GSGKTV) is a binding site for ATP. Residues 1005-1036 (QFDEFLQEKMLLKAERKFGPEFEDDSEEEQLV) form an NMP 2 region. Residues 1034-1036 (QLV) and 1063-1066 (VQLT) contribute to the AMP site. An LID 2 region spans residues 1108 to 1128 (DGFPRHPEEAQFLGERGFFPD). A compositionally biased stretch (acidic residues) spans 1223-1241 (EFPKDEEEMSEEDEEQEAD). The interval 1223-1243 (EFPKDEEEMSEEDEEQEADAT) is disordered. The adenylate kinase 3 stretch occupies residues 1395–1584 (VRIMIVGPPK…VWNEVLKDIQ (190 aa)). ATP is bound at residue 1404-1409 (KSGKTT). The tract at residues 1424 to 1455 (SVGDALRGMLNNHPDSELSLMLNWHLHKGKTV) is NMP 3. AMP-binding positions include Arg-1430, 1482–1485 (GYPV), and Gln-1489. An LID 3 region spans residues 1519–1533 (LEKKTEQSMSYPLHN).

The protein belongs to the adenylate kinase family. In terms of tissue distribution, highly expressed in the testis.

The protein localises to the cytoplasm. It is found in the nucleus. The protein resides in the cell projection. It localises to the cilium. Its subcellular location is the flagellum. It carries out the reaction a ribonucleoside 5'-phosphate + ATP = a ribonucleoside 5'-diphosphate + ADP. The catalysed reaction is AMP + ATP = 2 ADP. It catalyses the reaction GTP + AMP = GDP + ADP. The enzyme catalyses CMP + ATP = CDP + ADP. It carries out the reaction GTP + CMP = CDP + GDP. The catalysed reaction is dAMP + ATP = dADP + ADP. It catalyses the reaction dCMP + ATP = dCDP + ADP. The enzyme catalyses a ribonucleoside 5'-diphosphate + ATP = a ribonucleoside 5'-triphosphate + ADP. It carries out the reaction CDP + ATP = CTP + ADP. The catalysed reaction is CDP + GTP = CTP + GDP. It catalyses the reaction GDP + ATP = GTP + ADP. The enzyme catalyses UDP + ATP = UTP + ADP. It carries out the reaction GTP + UDP = UTP + GDP. The catalysed reaction is dTDP + GTP = dTTP + GDP. It catalyses the reaction dCDP + ATP = dCTP + ADP. The enzyme catalyses dCDP + GTP = dCTP + GDP. It carries out the reaction dGDP + ATP = dGTP + ADP. The catalysed reaction is dTDP + ATP = dTTP + ADP. It catalyses the reaction dADP + GTP = dATP + GDP. In terms of biological role, broad-specificity nucleoside phosphate kinase involved in cellular nucleotide homeostasis by catalyzing nucleoside-phosphate interconversions. Similar to other adenylate kinases, preferentially catalyzes the phosphorylation of the nucleoside monophosphate AMP with ATP as phosphate donor to produce ADP. In vitro, can also catalyze the phosphorylation of CMP, dAMP and dCMP and use GTP as an alternate phosphate donor. Moreover, exhibits a diphosphate kinase activity, producing ATP, CTP, GTP, UTP, TTP, dATP, dCTP and dGTP from the corresponding diphosphate substrates with either ATP or GTP as phosphate donors. For this activity shows the following substrate preference CDP &gt; UDP &gt; ADP &gt; TDP. This Mus musculus (Mouse) protein is Adenylate kinase 9.